The following is a 123-amino-acid chain: DNA-directed RNA polymerase I subunit RPA12 (123 aa).

Zn(2+) contacts are provided by C17, C20, C35, C38, C84, and C87. Residues 17 to 38 (CPDCGSVLPLPGVQDTVICPRC) form a C4-type zinc finger. The TFIIS-type zinc finger occupies 80–120 (VDRRCSRCGHEGMAYYTRQMRSADEGQTVFYTCINCKFQEK). The Hairpin motif lies at 103–104 (DE). Zn(2+)-binding residues include C112 and C115.

It belongs to the archaeal RpoM/eukaryotic RPA12/RPB9/RPC11 RNA polymerase family. As to quaternary structure, component of the RNA polymerase I (Pol I) complex consisting of 13 subunits: a ten-subunit catalytic core composed of POLR1A/RPA1, POLR1B/RPA2, POLR1C/RPAC1, POLR1D/RPAC2, POLR1H/RPA12, POLR2E/RPABC1, POLR2F/RPABC2, POLR2H/RPABC3, POLR2K/RPABC4 and POLR2L/RPABC5; a mobile stalk subunit POLR1F/RPA43 protruding from the core and additional subunits homologous to general transcription factors POLR1E/RPA49 and POLR1G/RPA34. Part of Pol I pre-initiation complex (PIC), in which Pol I core assembles with RRN3 and promoter-bound UTBF and SL1/TIF-IB complex.

It is found in the nucleus. The protein localises to the nucleolus. Core component of RNA polymerase I (Pol I), a DNA-dependent RNA polymerase which synthesizes ribosomal RNA precursors using the four ribonucleoside triphosphates as substrates. Can mediate Pol I proofreading of the nascent RNA transcript. Anchors into the Pol I active site to monitor transcription fidelity and cleave mis-incorporated 5'-ribonucleotides. The sequence is that of DNA-directed RNA polymerase I subunit RPA12 from Rattus norvegicus (Rat).